Here is a 736-residue protein sequence, read N- to C-terminus: Catalase-peroxidase 2 (736 aa).

The tryptophyl-tyrosyl-methioninium (Trp-Tyr) (with M-253) cross-link spans 91–227; it reads WHSAGTYRMG…LAAVQMGLIY (137 aa). Residue H92 is the Proton acceptor of the active site. Residues 227-253 constitute a cross-link (tryptophyl-tyrosyl-methioninium (Tyr-Met) (with W-91)); that stretch reads YVNPEGPDGNPDPVAAAYDIREVFGRM. H268 is a binding site for heme b.

The protein belongs to the peroxidase family. Peroxidase/catalase subfamily. In terms of assembly, homodimer or homotetramer. Heme b is required as a cofactor. Formation of the three residue Trp-Tyr-Met cross-link is important for the catalase, but not the peroxidase activity of the enzyme.

The catalysed reaction is H2O2 + AH2 = A + 2 H2O. The enzyme catalyses 2 H2O2 = O2 + 2 H2O. In terms of biological role, bifunctional enzyme with both catalase and broad-spectrum peroxidase activity. Shows peroxidase specificity towards odianisidine, ABTS and pyrogallol, but methoxyphenol and 2-chloronaphthol are not peroxidized. The chain is Catalase-peroxidase 2 from Burkholderia cenocepacia (strain ATCC BAA-245 / DSM 16553 / LMG 16656 / NCTC 13227 / J2315 / CF5610) (Burkholderia cepacia (strain J2315)).